The primary structure comprises 478 residues: uncharacterized protein (478 aa).

Residues lysine 5–proline 85 form the RRM domain. Serine 207 and serine 308 each carry phosphoserine.

The protein resides in the nucleus. Its subcellular location is the nucleolus. This is an uncharacterized protein from Schizosaccharomyces pombe (strain 972 / ATCC 24843) (Fission yeast).